The sequence spans 164 residues: Putative 4-hydroxy-4-methyl-2-oxoglutarate aldolase (164 aa).

Substrate-binding positions include 75–78 and Arg-97; that span reads GDML. Asp-98 lines the a divalent metal cation pocket.

Belongs to the class II aldolase/RraA-like family. Homotrimer. A divalent metal cation serves as cofactor.

The catalysed reaction is 4-hydroxy-4-methyl-2-oxoglutarate = 2 pyruvate. The enzyme catalyses oxaloacetate + H(+) = pyruvate + CO2. In terms of biological role, catalyzes the aldol cleavage of 4-hydroxy-4-methyl-2-oxoglutarate (HMG) into 2 molecules of pyruvate. Also contains a secondary oxaloacetate (OAA) decarboxylase activity due to the common pyruvate enolate transition state formed following C-C bond cleavage in the retro-aldol and decarboxylation reactions. This chain is Putative 4-hydroxy-4-methyl-2-oxoglutarate aldolase, found in Hahella chejuensis (strain KCTC 2396).